The following is a 433-amino-acid chain: Serine--tRNA ligase (433 aa).

235 to 237 (TSE) lines the L-serine pocket. 266 to 268 (RSE) serves as a coordination point for ATP. L-serine is bound at residue glutamate 289. 353–356 (EISS) contacts ATP. Residue serine 388 coordinates L-serine.

The protein belongs to the class-II aminoacyl-tRNA synthetase family. Type-1 seryl-tRNA synthetase subfamily. As to quaternary structure, homodimer. The tRNA molecule binds across the dimer.

It is found in the cytoplasm. It carries out the reaction tRNA(Ser) + L-serine + ATP = L-seryl-tRNA(Ser) + AMP + diphosphate + H(+). It catalyses the reaction tRNA(Sec) + L-serine + ATP = L-seryl-tRNA(Sec) + AMP + diphosphate + H(+). The protein operates within aminoacyl-tRNA biosynthesis; selenocysteinyl-tRNA(Sec) biosynthesis; L-seryl-tRNA(Sec) from L-serine and tRNA(Sec): step 1/1. Functionally, catalyzes the attachment of serine to tRNA(Ser). Is also able to aminoacylate tRNA(Sec) with serine, to form the misacylated tRNA L-seryl-tRNA(Sec), which will be further converted into selenocysteinyl-tRNA(Sec). The chain is Serine--tRNA ligase from Burkholderia lata (strain ATCC 17760 / DSM 23089 / LMG 22485 / NCIMB 9086 / R18194 / 383).